A 119-amino-acid polypeptide reads, in one-letter code: Putative membrane protein insertion efficiency factor (119 aa).

Belongs to the UPF0161 family.

It localises to the cell inner membrane. Functionally, could be involved in insertion of integral membrane proteins into the membrane. The polypeptide is Putative membrane protein insertion efficiency factor (Brucella anthropi (strain ATCC 49188 / DSM 6882 / CCUG 24695 / JCM 21032 / LMG 3331 / NBRC 15819 / NCTC 12168 / Alc 37) (Ochrobactrum anthropi)).